We begin with the raw amino-acid sequence, 403 residues long: Protein-export membrane protein SecD (403 aa).

A run of 6 helical transmembrane segments spans residues 14–34, 238–258, 265–285, 294–314, 336–356, and 365–385; these read VILL…MGIQ, FAEG…VILI, ILVL…LGAA, LAAI…QIII, FFII…LAYI, and IGLL…GVFI.

The protein belongs to the SecD/SecF family. SecD subfamily. Part of the protein translocation apparatus. Forms a complex with SecF.

It is found in the cell membrane. In terms of biological role, involved in protein export. This chain is Protein-export membrane protein SecD, found in Methanothermobacter thermautotrophicus (strain ATCC 29096 / DSM 1053 / JCM 10044 / NBRC 100330 / Delta H) (Methanobacterium thermoautotrophicum).